The following is a 98-amino-acid chain: Large ribosomal subunit protein bL28 (98 aa).

It belongs to the bacterial ribosomal protein bL28 family.

The protein is Large ribosomal subunit protein bL28 of Chelativorans sp. (strain BNC1).